The following is a 1669-amino-acid chain: Polycomb group protein Asx (1669 aa).

Positions 90–109 (IPPEKKPMAPSEEAAVSTAP) are disordered. In terms of domain architecture, DEUBAD spans 215–338 (PDSILASTNL…FEPFWGEKNS (124 aa)). Short sequence motifs (LXXLL motif) lie at residues 224 to 228 (LRALL) and 244 to 248 (LIQLL). The NEF motif signature appears at 283-285 (NEF). Positions 336–352 (KNSRGKDKDKLESDCKN) are enriched in basic and acidic residues. 8 disordered regions span residues 336–378 (KNSR…QQAT), 410–478 (SSTF…IVPN), 635–718 (FFTS…SAGA), 952–972 (MPHQ…QQQR), 1174–1193 (QQQS…QQQL), 1398–1437 (PGPG…PEQL), 1482–1505 (LHSI…TAGS), and 1587–1610 (SPTA…QHQH). Polar residues-rich tracts occupy residues 367-378 (ATSQQKPLQQAT), 413-425 (FPPT…VLNE), and 434-450 (PSSS…TIAT). The span at 465 to 474 (KDSKQPKMDE) shows a compositional bias: basic and acidic residues. A compositionally biased stretch (low complexity) spans 635-650 (FFTSSSSSNTATTAAN). A compositionally biased stretch (basic and acidic residues) spans 651–661 (KLEEHSDKPED). Positions 666-718 (IASSISGSTPASSITSTSCTSSSSSSASMSSSCSSSNSGSTTTAPTTSSSAGA) are enriched in low complexity. Composition is skewed to low complexity over residues 1174–1192 (QQQS…QQQQ) and 1404–1436 (TATA…APEQ). Over residues 1592 to 1610 (PSPINQQPQSQPTGTQHQH) the composition is skewed to low complexity. The PHD-type; atypical zinc finger occupies 1602–1666 (QPTGTQHQHP…IGAAKLCVAC (65 aa)).

This sequence belongs to the Asx family. As to quaternary structure, component of the polycomb repressive deubiquitinase (PR-DUB) complex, at least composed of caly/calypso, Asx and sba (MBD5/6 homolog). Interacts (via DEUBAD domain) with caly/calypso (via ULD domain); the interaction produces a stable heterodimer with a composite binding site for ubiquitin. Two copies of the caly-Asx heterodimer assemble into a bidentate tetramer. Interacts (via PHD domain) with sba (probably via MBD domain); the interaction is important for the stability of the PR-DUB complex. Interacts with tant. Interacts with cyclin CycG. In terms of tissue distribution, highly expressed in nurse cells and deposited in oocytes late in oogenesis. Ubiquitous in early embryos. Late embryos show higher levels in CNS and neurectoderm.

Its subcellular location is the nucleus. The protein localises to the chromosome. Its function is as follows. Non-catalytic component of the polycomb repressive deubiquitinase (PR-DUB) complex, a complex that specifically mediates deubiquitination of histone H2A monoubiquitinated at 'Lys-119' (H2AK118ub1). Activator of the PR-DUB complex involved in ubiquitin binding and allosteric activation of calypso deubiquitinase activity. PR-DUB does not deubiquitinate monoubiquitinated histone H2B. PR-DUB is required to maintain the transcriptionally repressive state of homeotic genes throughout development. The PR-DUB complex has weak or no activity toward 'Lys-48'- and 'Lys-63'-linked polyubiquitin chains. Atypical Polycomb group protein, which may be involved in both Polycomb group (PcG) and trithorax group (trxG) complexes. PcG and trxG proteins act by forming multiprotein complexes, which are respectively required to maintain the transcriptionally repressive and transcriptionally active state of homeotic genes throughout development. PcG and trxG protein complexes are not required to initiate repression and activation, but to maintain it during later stages of development. The sequence is that of Polycomb group protein Asx from Drosophila melanogaster (Fruit fly).